Here is a 126-residue protein sequence, read N- to C-terminus: Small ribosomal subunit protein bS6 (126 aa).

A disordered region spans residues 101–126 (VMMKAKEERSAKREDAAPRAEEAAAE). Residues 104–126 (KAKEERSAKREDAAPRAEEAAAE) are compositionally biased toward basic and acidic residues.

The protein belongs to the bacterial ribosomal protein bS6 family.

Its function is as follows. Binds together with bS18 to 16S ribosomal RNA. The protein is Small ribosomal subunit protein bS6 of Aliivibrio fischeri (strain ATCC 700601 / ES114) (Vibrio fischeri).